The following is a 117-amino-acid chain: UPF0342 protein LGAS_1451 (117 aa).

It belongs to the UPF0342 family.

This Lactobacillus gasseri (strain ATCC 33323 / DSM 20243 / BCRC 14619 / CIP 102991 / JCM 1131 / KCTC 3163 / NCIMB 11718 / NCTC 13722 / AM63) protein is UPF0342 protein LGAS_1451.